The following is a 570-amino-acid chain: Urease subunit alpha (570 aa).

One can recognise a Urease domain in the interval 131–570 (GGFDSHIHFI…LPMAQRYFMY (440 aa)). Ni(2+) is bound by residues His136, His138, and Lys219. The residue at position 219 (Lys219) is an N6-carboxylysine. His221 contacts substrate. Ni(2+) is bound by residues His248 and His274. The active-site Proton donor is the His322. Asp362 is a Ni(2+) binding site.

It belongs to the metallo-dependent hydrolases superfamily. Urease alpha subunit family. Heterotrimer of UreA (gamma), UreB (beta) and UreC (alpha) subunits. Three heterotrimers associate to form the active enzyme. The cofactor is Ni cation. In terms of processing, carboxylation allows a single lysine to coordinate two nickel ions.

Its subcellular location is the cytoplasm. It carries out the reaction urea + 2 H2O + H(+) = hydrogencarbonate + 2 NH4(+). It functions in the pathway nitrogen metabolism; urea degradation; CO(2) and NH(3) from urea (urease route): step 1/1. This Rhodopseudomonas palustris (strain BisB18) protein is Urease subunit alpha.